We begin with the raw amino-acid sequence, 140 residues long: ISDra2 transposase TnpA (140 aa).

Mg(2+) is bound by residues histidine 67 and histidine 69. The interval 127-133 (AQIQKYI) is mobile alpha helix. Tyrosine 132 acts as the Nucleophile in catalysis. Glutamine 136 is a binding site for Mg(2+).

Belongs to the transposase 17 family. Homodimer. Mg(2+) is required as a cofactor.

With respect to regulation, both the excision and insertion steps are inhibited by TnpB. Its function is as follows. A transposase that is part of insertion sequence (IS) element ISDra2, it is necessary and sufficient for both transposon excision and insertion of ISDra2. This protein alone can be provided in trans and allows transposition of an empty IS element (tnpA or tnpA-tnpB replaced by a selectable marker). ISDra2 binds subterminal imperfect palindromes at the left (LE) and right (RE) ends of the element and cleaves only the 'top strand' which is circularized and subsequently reinserted into the DNA target. This is called a 'peel and paste' mechanism and increases the copy number of the IS. Transposition is linked to DNA replication in the absence of irradiation, with maximal activity when the 'top strand' is on the replication lagging strand, and occurs preferentially on the lagging strand. The IS element inserts 3' of the target sequence 5'-TTGAT-3'; target duplication has not been observed. The polypeptide is ISDra2 transposase TnpA (Deinococcus radiodurans (strain ATCC 13939 / DSM 20539 / JCM 16871 / CCUG 27074 / LMG 4051 / NBRC 15346 / NCIMB 9279 / VKM B-1422 / R1)).